Reading from the N-terminus, the 565-residue chain is Proline--tRNA ligase (565 aa).

This sequence belongs to the class-II aminoacyl-tRNA synthetase family. ProS type 1 subfamily. In terms of assembly, homodimer.

The protein localises to the cytoplasm. The enzyme catalyses tRNA(Pro) + L-proline + ATP = L-prolyl-tRNA(Pro) + AMP + diphosphate. Functionally, catalyzes the attachment of proline to tRNA(Pro) in a two-step reaction: proline is first activated by ATP to form Pro-AMP and then transferred to the acceptor end of tRNA(Pro). As ProRS can inadvertently accommodate and process non-cognate amino acids such as alanine and cysteine, to avoid such errors it has two additional distinct editing activities against alanine. One activity is designated as 'pretransfer' editing and involves the tRNA(Pro)-independent hydrolysis of activated Ala-AMP. The other activity is designated 'posttransfer' editing and involves deacylation of mischarged Ala-tRNA(Pro). The misacylated Cys-tRNA(Pro) is not edited by ProRS. In Lactobacillus johnsonii (strain CNCM I-12250 / La1 / NCC 533), this protein is Proline--tRNA ligase.